Here is a 503-residue protein sequence, read N- to C-terminus: Lysine--tRNA ligase (503 aa).

Mg(2+) contacts are provided by E414 and E421.

It belongs to the class-II aminoacyl-tRNA synthetase family. Homodimer. The cofactor is Mg(2+).

It localises to the cytoplasm. It carries out the reaction tRNA(Lys) + L-lysine + ATP = L-lysyl-tRNA(Lys) + AMP + diphosphate. This chain is Lysine--tRNA ligase, found in Neisseria meningitidis serogroup B (strain ATCC BAA-335 / MC58).